A 95-amino-acid chain; its full sequence is Co-chaperonin GroES (95 aa).

The protein belongs to the GroES chaperonin family. As to quaternary structure, heptamer of 7 subunits arranged in a ring. Interacts with the chaperonin GroEL.

The protein localises to the cytoplasm. Together with the chaperonin GroEL, plays an essential role in assisting protein folding. The GroEL-GroES system forms a nano-cage that allows encapsulation of the non-native substrate proteins and provides a physical environment optimized to promote and accelerate protein folding. GroES binds to the apical surface of the GroEL ring, thereby capping the opening of the GroEL channel. This Streptococcus salivarius protein is Co-chaperonin GroES.